Reading from the N-terminus, the 437-residue chain is Transcription factor AP-2-alpha (437 aa).

A Glycyl lysine isopeptide (Lys-Gly) (interchain with G-Cter in SUMO); alternate cross-link involves residue lysine 10. Residue lysine 10 forms a Glycyl lysine isopeptide (Lys-Gly) (interchain with G-Cter in SUMO2); alternate linkage. Residues cysteine 14 to leucine 107 form a disordered region. Positions tyrosine 57–tyrosine 62 match the PPxY motif motif. Low complexity-rich tracts occupy residues isoleucine 65–serine 74 and glutamine 88–glutamine 101. Glycyl lysine isopeptide (Lys-Gly) (interchain with G-Cter in SUMO2) cross-links involve residues lysine 177 and lysine 184. Serine 239 is subject to Phosphoserine; by PKA. The interval arginine 280–aspartate 410 is H-S-H (helix-span-helix), dimerization. Residues leucine 414–lysine 427 are compositionally biased toward polar residues. Positions leucine 414 to lysine 437 are disordered. The span at serine 428 to lysine 437 shows a compositional bias: basic and acidic residues.

The protein belongs to the AP-2 family. Binds DNA as a dimer. Can form homodimers or heterodimers with other AP-2 family members. Interacts with WWOX. Interacts with CITED4. Interacts with UBE2I. Interacts with RALBP1 in a complex also containing EPN1 and NUMB during interphase and mitosis. Interacts with KCTD1; this interaction represses transcription activation. Interacts (via C-terminus) with CITED2 (via C-terminus); the interaction stimulates TFAP2A-transcriptional activation. Interacts (via N-terminus) with EP300 (via N-terminus); the interaction requires CITED2. Interacts with KCTD15; this interaction inhibits TFAP2A transcriptional activation. Sumoylated on Lys-10; which inhibits transcriptional activity.

Its subcellular location is the nucleus. Its function is as follows. Sequence-specific DNA-binding protein that interacts with inducible viral and cellular enhancer elements to regulate transcription of selected genes. AP-2 factors bind to the consensus sequence 5'-GCCNNNGGC-3' and activate genes involved in a large spectrum of important biological functions including proper eye, face, body wall, limb and neural tube development. They also suppress a number of genes including MCAM/MUC18, C/EBP alpha and MYC. AP-2-alpha is the only AP-2 protein required for early morphogenesis of the lens vesicle. Together with the CITED2 coactivator, stimulates the PITX2 P1 promoter transcription activation. Associates with chromatin to the PITX2 P1 promoter region. The chain is Transcription factor AP-2-alpha (TFAP2A) from Homo sapiens (Human).